We begin with the raw amino-acid sequence, 377 residues long: UDP-N,N'-diacetylbacillosamine 2-epimerase (hydrolyzing) (377 aa).

The protein belongs to the UDP-N-acetylglucosamine 2-epimerase family.

It carries out the reaction UDP-N,N'-diacetylbacillosamine + H2O = 2,4-diacetamido-2,4,6-trideoxy-alpha-D-mannopyranose + UDP + H(+). In terms of biological role, involved in biosynthesis of legionaminic acid (5,7-diamino-3,5,7,9-tetradeoxy-D-glycero-D-galacto-non-2-ulosonic acid)(Leg), a sialic acid-like derivative that is incorporated into virulence-associated cell surface glycoconjugates such as lipopolysaccharide (LPS) which could be a key determinant in the ability of L.pneumophila to inhibit the fusion of phagosomes with lysosomes. LPS contains a majority alpha2,4-linked homomer of legionaminic acid. Catalyzes the conversion of UDP-N,N'-diacetylbacillosamine (Bac2Ac4Ac) into 2,4-diacetamido-2,4,6-trideoxymannose and UDP. This is UDP-N,N'-diacetylbacillosamine 2-epimerase (hydrolyzing) from Legionella pneumophila subsp. pneumophila (strain Philadelphia 1 / ATCC 33152 / DSM 7513).